The following is a 237-amino-acid chain: Ribonuclease 3 (237 aa).

The region spanning 3–133 (SRQPLLDALG…LLGAIYLQHG (131 aa)) is the RNase III domain. E43 is a binding site for Mg(2+). Residue D47 is part of the active site. Mg(2+) contacts are provided by D119 and E122. E122 is an active-site residue. Positions 160–228 (DWKTSLQELT…AAATWKALDV (69 aa)) constitute a DRBM domain.

This sequence belongs to the ribonuclease III family. As to quaternary structure, homodimer. Mg(2+) serves as cofactor.

The protein resides in the cytoplasm. The enzyme catalyses Endonucleolytic cleavage to 5'-phosphomonoester.. Functionally, digests double-stranded RNA. Involved in the processing of primary rRNA transcript to yield the immediate precursors to the large and small rRNAs (23S and 16S). Processes some mRNAs, and tRNAs when they are encoded in the rRNA operon. Processes pre-crRNA and tracrRNA of type II CRISPR loci if present in the organism. The protein is Ribonuclease 3 of Mycolicibacterium paratuberculosis (strain ATCC BAA-968 / K-10) (Mycobacterium paratuberculosis).